Consider the following 162-residue polypeptide: Probable chemoreceptor glutamine deamidase CheD (162 aa).

Belongs to the CheD family.

The enzyme catalyses L-glutaminyl-[protein] + H2O = L-glutamyl-[protein] + NH4(+). Its function is as follows. Probably deamidates glutamine residues to glutamate on methyl-accepting chemotaxis receptors (MCPs), playing an important role in chemotaxis. This chain is Probable chemoreceptor glutamine deamidase CheD, found in Clostridium botulinum (strain Eklund 17B / Type B).